A 572-amino-acid polypeptide reads, in one-letter code: Urease subunit alpha (572 aa).

The 437-residue stretch at 136-572 folds into the Urease domain; sequence GGIDTHIHWI…VPLAQRYFLF (437 aa). Ni(2+) contacts are provided by H141, H143, and K224. An N6-carboxylysine modification is found at K224. H226 serves as a coordination point for substrate. Residues H253 and H279 each coordinate Ni(2+). H327 serves as the catalytic Proton donor. Residue D367 participates in Ni(2+) binding.

The protein belongs to the metallo-dependent hydrolases superfamily. Urease alpha subunit family. In terms of assembly, heterotrimer of UreA (gamma), UreB (beta) and UreC (alpha) subunits. Three heterotrimers associate to form the active enzyme. The cofactor is Ni cation. Post-translationally, carboxylation allows a single lysine to coordinate two nickel ions.

Its subcellular location is the cytoplasm. The catalysed reaction is urea + 2 H2O + H(+) = hydrogencarbonate + 2 NH4(+). The protein operates within nitrogen metabolism; urea degradation; CO(2) and NH(3) from urea (urease route): step 1/1. The protein is Urease subunit alpha of Actinobacillus pleuropneumoniae serotype 5b (strain L20).